Consider the following 493-residue polypeptide: Probable NADPH:adrenodoxin oxidoreductase, mitochondrial (493 aa).

FAD-binding residues include Ser-26, Glu-48, Leu-56, and Ile-100. NADP(+) is bound by residues Asn-177–Val-180, Arg-223–Arg-224, and Glu-235. Residues Trp-407 and Gly-414–Ile-416 contribute to the FAD site. Gly-414 serves as a coordination point for NADP(+).

It belongs to the ferredoxin--NADP reductase type 1 family. The cofactor is FAD.

The protein localises to the mitochondrion inner membrane. The enzyme catalyses 2 reduced [adrenodoxin] + NADP(+) + H(+) = 2 oxidized [adrenodoxin] + NADPH. Adrenodoxin reductase transfers electrons from NADPH to adrenodoxin, which is involved in heme A biosynthesis and in iron-sulfur cluster assembly. Involved in the electron transfer to heme A synthase COX15, a heme protein that catalyzes the conversion of heme O to heme A. Required for the de novo synthesis of Fe-S clusters on iron sulfur cluster assembly protein ISU1. Involved in electron delivery for Fe-S cluster synthesis. Essential for coenzyme Q biosynthesis. May be involved in the electron transfer required for the hydroxylation reaction performed by COQ6. May play a role in cellular and mitochondrial iron homeostasis. This is Probable NADPH:adrenodoxin oxidoreductase, mitochondrial from Saccharomyces cerevisiae (strain ATCC 204508 / S288c) (Baker's yeast).